Here is a 432-residue protein sequence, read N- to C-terminus: MGNNVVVLGTQWGDEGKGKIVDLLTERAKYVVRYQGGHNAGHTLVINGEKTVLHLIPSGILRENVTSIIGNGVVLSPAALMKEMKELEDRGIPVRERLLLSEACPLILDYHVALDNACEKARGAKAIGTTGRGIGPAYEDKVARRGLRVGDLFDKETFAEKLKEVMEYHNFQLVNYYKAEAVDYQKVLDDTMAVADILTSMVVDVSDLLDQARQRGDFVMFEGAQGTLLDIDHGTYPYVTSSNTTAGGVATGSGLGPRYVDYVLGILKAYSTRVGAGPFPTELFDETGEFLCKQGNEYGATTGRRRRTGWLDTVAVRRAVQLNSLSGFCLTKLDVLDGLKEVKLCVAYRMPDGREVTTTPLAADDWKGVEPIYETMPGWSESTFGVKDRSGLPQAALNYIKRIEELTGVPIDIISTGPDRTETMILRDPFDA.

GTP-binding positions include 13–19 (GDEGKGK) and 41–43 (GHT). Asp-14 serves as the catalytic Proton acceptor. Asp-14 and Gly-41 together coordinate Mg(2+). Residues 14 to 17 (DEGK), 39 to 42 (NAGH), Thr-130, Arg-144, Gln-225, Thr-240, and Arg-304 each bind IMP. Residue His-42 is the Proton donor of the active site. 300–306 (ATTGRRR) provides a ligand contact to substrate. GTP contacts are provided by residues Arg-306, 332-334 (KLD), and 415-417 (STG).

This sequence belongs to the adenylosuccinate synthetase family. In terms of assembly, homodimer. Mg(2+) serves as cofactor.

The protein resides in the cytoplasm. It carries out the reaction IMP + L-aspartate + GTP = N(6)-(1,2-dicarboxyethyl)-AMP + GDP + phosphate + 2 H(+). Its pathway is purine metabolism; AMP biosynthesis via de novo pathway; AMP from IMP: step 1/2. In terms of biological role, plays an important role in the de novo pathway of purine nucleotide biosynthesis. Catalyzes the first committed step in the biosynthesis of AMP from IMP. This is Adenylosuccinate synthetase from Salmonella choleraesuis (strain SC-B67).